A 296-amino-acid polypeptide reads, in one-letter code: LysM and putative peptidoglycan-binding domain-containing protein 4 (296 aa).

Over M1–Q217 the chain is Extracellular. The N-linked (GlcNAc...) asparagine glycan is linked to N30. The region spanning L74–S118 is the LysM domain. A helical membrane pass occupies residues W218 to V238. Residues Y239 to N296 lie on the Cytoplasmic side of the membrane.

It is found in the membrane. The protein is LysM and putative peptidoglycan-binding domain-containing protein 4 (LYSMD4) of Pongo abelii (Sumatran orangutan).